The primary structure comprises 124 residues: Sulfur globule protein CV2 (124 aa).

Positions 1–22 (MKKLATAAAVAALLGASASASA) are cleaved as a signal peptide.

As to quaternary structure, the protein envelope of the sulfur globules is composed of the three different proteins CV1, CV2 and CV3.

Functionally, structural protein of the sulfur globules, which are intracellular globules that serve for sulfur storage in purple sulfur bacteria. This chain is Sulfur globule protein CV2 (sgpB), found in Allochromatium vinosum (strain ATCC 17899 / DSM 180 / NBRC 103801 / NCIMB 10441 / D) (Chromatium vinosum).